Here is a 367-residue protein sequence, read N- to C-terminus: Glutamate 5-kinase (367 aa).

Lysine 10 serves as a coordination point for ATP. The substrate site is built by serine 50, aspartate 137, and asparagine 149. Residues 169 to 170 (TD) and 211 to 217 (TGGMATK) each bind ATP. The region spanning 275 to 353 (AGEITVDDGA…QQISEILGYE (79 aa)) is the PUA domain.

This sequence belongs to the glutamate 5-kinase family.

Its subcellular location is the cytoplasm. The enzyme catalyses L-glutamate + ATP = L-glutamyl 5-phosphate + ADP. It participates in amino-acid biosynthesis; L-proline biosynthesis; L-glutamate 5-semialdehyde from L-glutamate: step 1/2. In terms of biological role, catalyzes the transfer of a phosphate group to glutamate to form L-glutamate 5-phosphate. The sequence is that of Glutamate 5-kinase from Yersinia pseudotuberculosis serotype IB (strain PB1/+).